The following is an 87-amino-acid chain: Cell division protein FtsL (87 aa).

Topologically, residues M1–F6 are cytoplasmic. The chain crosses the membrane as a helical span at residues F7–Q23. The Periplasmic portion of the chain corresponds to N24–R87. Residues T31–N71 are a coiled coil. The disordered stretch occupies residues E68–R87.

It belongs to the FtsL family. As to quaternary structure, part of a complex composed of FtsB, FtsL and FtsQ.

The protein localises to the cell inner membrane. Functionally, essential cell division protein. May link together the upstream cell division proteins, which are predominantly cytoplasmic, with the downstream cell division proteins, which are predominantly periplasmic. In Neisseria gonorrhoeae (strain ATCC 700825 / FA 1090), this protein is Cell division protein FtsL.